The sequence spans 585 residues: tRNA 5-methylaminomethyl-2-thiouridine biosynthesis bifunctional protein MnmC (585 aa).

The tract at residues 1–236 (MTPDGLYCDP…KRERLEAVWP (236 aa)) is tRNA (mnm(5)s(2)U34)-methyltransferase. The segment at 254–585 (LGAGIAGASL…SRRAGQGAAG (332 aa)) is FAD-dependent cmnm(5)s(2)U34 oxidoreductase. The disordered stretch occupies residues 564–585 (EAMAPGRFAERRSRRAGQGAAG).

It in the N-terminal section; belongs to the methyltransferase superfamily. tRNA (mnm(5)s(2)U34)-methyltransferase family. This sequence in the C-terminal section; belongs to the DAO family. Requires FAD as cofactor.

The protein localises to the cytoplasm. The catalysed reaction is 5-aminomethyl-2-thiouridine(34) in tRNA + S-adenosyl-L-methionine = 5-methylaminomethyl-2-thiouridine(34) in tRNA + S-adenosyl-L-homocysteine + H(+). Its function is as follows. Catalyzes the last two steps in the biosynthesis of 5-methylaminomethyl-2-thiouridine (mnm(5)s(2)U) at the wobble position (U34) in tRNA. Catalyzes the FAD-dependent demodification of cmnm(5)s(2)U34 to nm(5)s(2)U34, followed by the transfer of a methyl group from S-adenosyl-L-methionine to nm(5)s(2)U34, to form mnm(5)s(2)U34. This is tRNA 5-methylaminomethyl-2-thiouridine biosynthesis bifunctional protein MnmC from Maricaulis maris (strain MCS10) (Caulobacter maris).